We begin with the raw amino-acid sequence, 1206 residues long: MKKNQTMQGTFSKLFGKKHAHPSTTSLYATNPPWIFTHEAQEEGTRDFDGIYYGDNRFNTVSESGTATLKARPRVRPLLTFIPLNAQENHGLAVPTPSVPEDFADKEVGGTSTLVNGNLRLYSSVGDLRPACYDLDSSIPPPPPGPAPGPPQDISQPPGESPPPPPPSVPPPPPPPLLVEPPPPPSTAPPPPPPLDILSPPSTPTPPDFIPPAPPSAFLSPPPPSLPAPGPPAPVSLHTPGTHLFPPGAITKWKSEVALNGRHPEDPRTSPPKSPAELKRSPLGPSPEPHLTFPRSPKVPPPTPVRTSSIPVQEAPGASPEEEEATQKTSAPSPLPPSFNIRPASQIYPDRALEPEQPREPRPETPGSPRLRQSEPQTNGQAGAPPPAPPLPPPAPPLPPPAPSLPPAAPPLPSTELAAPPSSGFMKTSKSNSPALKPKPKPPSVEDTASSEPVDWRDPRQMEKLRSELSAYLCGTRKEDRSLSHRPGPTVALKDKENNKGTSLSEEAAPPSLPEKVHPCIPEKSPSSSSLPEREATSSLVLPPVDYIAQDTPAPSVRQIRSELEARFASSAEKEAKPSLASLPPKPRLEGGRTFENGTDNGRFHKPATKNPPQPSTTPLPTTILQPKVVPGPATSPKVTPGPATPFKPTPGQAILPKATPGLTLPLKPTPEQTTSPKNTPGKATPLKDTPGQATTPKDTPGQDTPPKDTPGQAAVLKNAPELSTPSSQLMAEKDLASVRQREKPETQEDPVATQLSTNGTLSPPALPPKMSTSGEEAPFLYRPHRSQNSHSRGVAVVTPTRARGEAPDSGDVVDEKELQNHPAKSLTPGQPADQLLRHPVTGEVVERGSPMALLLAARQRAQKTRTGGTAIGRSSLPGSLRDHSNQPEASSDSIFYRGSRPNSFIVVPKVPSETEDSHLTSARPTGPSHWKPQQGPDTQGSEPTYRHGWTKAETPAPVARERPAPSSLPQSRALPKSFSSPPSPSYKREEEEEEFSFDIIPPPPEFSNDPEPPAPGQQHQGRRGSPPRNNFSDLGQSWGPNPTPGFSRFRGTQYPESGGLDRFSGSGRSLIKKRLYVGESHRNPGMPRGSTGRSLSSPNCFGPQPGGPEMRRVNSAGRAAPGGLHARRLSLEGARGATEVKFKAPGGGGGSSSKAGDYGFVPAKGSRSPHGNTHYGSPINTFTVRPGTRHPISYAYPGTHRKATS.

Disordered stretches follow at residues 133–547, 568–837, and 859–1206; these read YDLD…PVDY, FASS…DQLL, and RQRA…KATS. Pro residues-rich tracts occupy residues 139–151 and 159–234; these read IPPP…PGPP and GESP…PPAP. Phosphoserine is present on Ser255. The segment covering 305 to 319 has biased composition (low complexity); that stretch reads VRTSSIPVQEAPGAS. Over residues 351-363 the composition is skewed to basic and acidic residues; that stretch reads RALEPEQPREPRP. Over residues 384–413 the composition is skewed to pro residues; sequence APPPAPPLPPPAPPLPPPAPSLPPAAPPLP. The segment covering 414–436 has biased composition (low complexity); it reads STELAAPPSSGFMKTSKSNSPAL. Residues 454–467 show a composition bias toward basic and acidic residues; sequence VDWRDPRQMEKLRS. The segment covering 522 to 531 has biased composition (low complexity); sequence PEKSPSSSSL. Basic and acidic residues predominate over residues 568 to 577; it reads FASSAEKEAK. Residues 656–671 show a composition bias toward low complexity; that stretch reads LPKATPGLTLPLKPTP. Thr680 carries the phosphothreonine modification. Residues 732–747 show a composition bias toward basic and acidic residues; sequence AEKDLASVRQREKPET. A compositionally biased stretch (pro residues) spans 1001–1016; it reads IPPPPEFSNDPEPPAP. A compositionally biased stretch (polar residues) spans 1028–1041; sequence PRNNFSDLGQSWGP. Omega-N-methylarginine is present on residues Arg1051, Arg1083, and Arg1094. The segment covering 1170–1184 has biased composition (polar residues); the sequence is PHGNTHYGSPINTFT.

This is an uncharacterized protein from Mus musculus (Mouse).